Consider the following 572-residue polypeptide: Proline--tRNA ligase (572 aa).

Belongs to the class-II aminoacyl-tRNA synthetase family. ProS type 1 subfamily. As to quaternary structure, homodimer.

The protein resides in the cytoplasm. The enzyme catalyses tRNA(Pro) + L-proline + ATP = L-prolyl-tRNA(Pro) + AMP + diphosphate. Functionally, catalyzes the attachment of proline to tRNA(Pro) in a two-step reaction: proline is first activated by ATP to form Pro-AMP and then transferred to the acceptor end of tRNA(Pro). As ProRS can inadvertently accommodate and process non-cognate amino acids such as alanine and cysteine, to avoid such errors it has two additional distinct editing activities against alanine. One activity is designated as 'pretransfer' editing and involves the tRNA(Pro)-independent hydrolysis of activated Ala-AMP. The other activity is designated 'posttransfer' editing and involves deacylation of mischarged Ala-tRNA(Pro). The misacylated Cys-tRNA(Pro) is not edited by ProRS. The protein is Proline--tRNA ligase of Haemophilus influenzae (strain PittEE).